The following is a 204-amino-acid chain: Large ribosomal subunit protein uL4 (204 aa).

A disordered region spans residues 52–76 (AEVRGGGKKPWAQKGGGRARAGSRR).

Belongs to the universal ribosomal protein uL4 family. As to quaternary structure, part of the 50S ribosomal subunit.

Functionally, one of the primary rRNA binding proteins, this protein initially binds near the 5'-end of the 23S rRNA. It is important during the early stages of 50S assembly. It makes multiple contacts with different domains of the 23S rRNA in the assembled 50S subunit and ribosome. Forms part of the polypeptide exit tunnel. This chain is Large ribosomal subunit protein uL4, found in Sulfurimonas denitrificans (strain ATCC 33889 / DSM 1251) (Thiomicrospira denitrificans (strain ATCC 33889 / DSM 1251)).